A 641-amino-acid chain; its full sequence is WW domain-binding protein 11 (641 aa).

Polar residues predominate over residues 1-11 (MGRRSTSSTKS). The tract at residues 1-37 (MGRRSTSSTKSGKFMNPTDQARKEARKRELKKNKKQR) is disordered. Residues 1-45 (MGRRSTSSTKSGKFMNPTDQARKEARKRELKKNKKQRMMVRAAVL) form a required for nuclear import region. Position 13 is an N6-acetyllysine (lysine 13). Residues 28 to 37 (RELKKNKKQR) show a composition bias toward basic residues. Residues 75-133 (EKVLKDKRKKLRETFERILRLYEKENPDIYKELRKLEVEYEQKRAQLSQYFDAVKNAQH) adopt a coiled-coil conformation. Serine 181 is modified (phosphoserine). A disordered region spans residues 188–213 (HGVPRLPPGRKPPGPPPGPPPPQVLQ). Arginine 192 bears the Omega-N-methylarginine mark. The span at 192-210 (RLPPGRKPPGPPPGPPPPQ) shows a compositional bias: pro residues. An interaction with PP1 region spans residues 217–221 (RKVGF). Phosphotyrosine is present on tyrosine 236. Residues 236-550 (YSPELAQRGH…IQRPKADDAS (315 aa)) form a disordered region. A Phosphoserine modification is found at serine 237. Acidic residues predominate over residues 253 to 263 (SEDDGYPEDMD). Basic and acidic residues predominate over residues 276-304 (TDRSDAESDGDEFGHREDSERDNTEEKKS). Phosphoserine occurs at positions 279 and 283. Residues 306–310 (LSVRF) are interaction with PP1. Acidic residues predominate over residues 351–365 (EFSEEEDADDSDDSE). Phosphoserine occurs at positions 353, 361, and 364. The span at 366–380 (AEKQSQKQHKDDGHS) shows a compositional bias: basic and acidic residues. The segment covering 381 to 404 (DSTAAASSQQQAPPQSAPASQIQA) has biased composition (low complexity). 3 stretches are compositionally biased toward pro residues: residues 405–447 (PPMP…PPGM), 456–504 (RLLP…PPRP), and 510–530 (PLVP…PLPN). The PGR motif lies at 455-466 (PRLLPPGPPPGR). A Glycyl lysine isopeptide (Lys-Gly) (interchain with G-Cter in SUMO2) cross-link involves residue lysine 557. The residue at position 565 (lysine 565) is an N6-acetyllysine. Residue lysine 572 forms a Glycyl lysine isopeptide (Lys-Gly) (interchain with G-Cter in SUMO2) linkage. The disordered stretch occupies residues 588–620 (ENKGATAVPQRRSEDDSAVPVAKAAPRSGPSVA). Serine 600 carries the phosphoserine modification. A required for nuclear export region spans residues 633–641 (FMKEMEGLL).

As to quaternary structure, interacts via the PGR motif with PQBP1 in the nucleus. Interacts with the WW domains of WBP4. Interacts with PPP1CA, PPP1CB and PPP1CC. As to expression, ubiquitously expressed, with highest levels in testis.

The protein localises to the nucleus. It localises to the cytoplasm. Activates pre-mRNA splicing. May inhibit PP1 phosphatase activity. In Mus musculus (Mouse), this protein is WW domain-binding protein 11 (Wbp11).